A 523-amino-acid polypeptide reads, in one-letter code: Protein tweety homolog 3 (523 aa).

At 1–42 (MAGVSYAAPWWVSLLHRLPHFDLSWEATSSQFRPEDTDYQQA) the chain is on the extracellular side. Residues 43 to 63 (LLLLGAAALACLALDLLFLLF) traverse the membrane as a helical segment. The Cytoplasmic segment spans residues 64–86 (YSFWLCCRRRKSEEHLDADCCCT). A helical transmembrane segment spans residues 87–107 (AWCVIIATLVCSAGIAVGFYG). The Extracellular segment spans residues 108–211 (NGETSDGIHR…VDLYDWYRWL (104 aa)). Residues E110 and D113 each coordinate Ca(2+). N-linked (GlcNAc...) asparagine glycans are attached at residues N126 and N144. The helical transmembrane segment at 212–232 (GYLGLLLLDVIICLLVLVGLI) threads the bilayer. The Cytoplasmic segment spans residues 233–236 (RSSK). The helical transmembrane segment at 237-257 (GILVGVCLLGVLALVISWGAL) threads the bilayer. The Extracellular portion of the chain corresponds to 258–386 (GLELAVSVGS…LTGFCYDGVE (129 aa)). Intrachain disulfides connect C271–C381 and C299–C366. N351 is a glycosylation site (N-linked (GlcNAc...) asparagine). The helical transmembrane segment at 387-407 (GLIYLALFSFVTALMFSSIVC) threads the bilayer. Topologically, residues 408 to 523 (SVPHTWQQKR…QPRPDSSGSH (116 aa)) are cytoplasmic. 2 disordered regions span residues 413–435 (WQQK…RQAH) and 482–523 (QNPR…SGSH). S496 is modified (phosphoserine). The PY-motif; mediates interaction with NEDD4L motif lies at 498 to 501 (PPSY). A compositionally biased stretch (polar residues) spans 501-523 (YTSSMRAKYLATSQPRPDSSGSH). 2 positions are modified to phosphoserine: S504 and S522.

This sequence belongs to the tweety family. In terms of assembly, homotetramer; disulfide-linked. Homodimer. Interacts with NEDD4L. In terms of processing, ubiquitinated by NEDD4L. Post-translationally, N-Glycosylated. Contains high-mannose, hybrid and complex oligosaccharides. As to expression, expressed in excitable tissues. Expressed in the brain, heart, skeletal muscle, colon, spleen, kidney and peripheral blood leukocytes.

It localises to the cell membrane. The catalysed reaction is chloride(in) = chloride(out). It catalyses the reaction L-glutamate(out) = L-glutamate(in). Its function is as follows. Calcium-independent, swelling-dependent volume-regulated anion channel (VRAC-swell) which plays a pivotal role in the process of regulatory volume decrease (RVD) in the brain through the efflux of anions like chloride and organic osmolytes like glutamate. Probable large-conductance Ca(2+)-activated chloride channel. The polypeptide is Protein tweety homolog 3 (TTYH3) (Homo sapiens (Human)).